The chain runs to 571 residues: Urease subunit alpha (571 aa).

Residues 133 to 571 enclose the Urease domain; it reads GGIDTHIHFI…LPLAQRYFLF (439 aa). Residues His138, His140, and Lys221 each coordinate Ni(2+). Residue Lys221 is modified to N6-carboxylysine. His223 is a substrate binding site. Ni(2+) contacts are provided by His250 and His276. The active-site Proton donor is the His324. Ni(2+) is bound at residue Asp364.

It belongs to the metallo-dependent hydrolases superfamily. Urease alpha subunit family. As to quaternary structure, heterotrimer of UreA (gamma), UreB (beta) and UreC (alpha) subunits. Three heterotrimers associate to form the active enzyme. Ni cation serves as cofactor. In terms of processing, carboxylation allows a single lysine to coordinate two nickel ions.

Its subcellular location is the cytoplasm. It carries out the reaction urea + 2 H2O + H(+) = hydrogencarbonate + 2 NH4(+). It functions in the pathway nitrogen metabolism; urea degradation; CO(2) and NH(3) from urea (urease route): step 1/1. This chain is Urease subunit alpha, found in Corynebacterium efficiens (strain DSM 44549 / YS-314 / AJ 12310 / JCM 11189 / NBRC 100395).